The sequence spans 329 residues: GTP 3',8-cyclase (329 aa).

A Radical SAM core domain is found at 8 to 229 (AFARTFYYLR…AGWQRRLPGR (222 aa)). Arginine 17 is a binding site for GTP. Positions 24 and 28 each coordinate [4Fe-4S] cluster. Tyrosine 30 is an S-adenosyl-L-methionine binding site. Cysteine 31 is a binding site for [4Fe-4S] cluster. Arginine 68 serves as a coordination point for GTP. Residue glycine 72 coordinates S-adenosyl-L-methionine. Residue threonine 99 coordinates GTP. Serine 123 provides a ligand contact to S-adenosyl-L-methionine. A GTP-binding site is contributed by lysine 160. Methionine 194 provides a ligand contact to S-adenosyl-L-methionine. Cysteine 257 and cysteine 260 together coordinate [4Fe-4S] cluster. Residue 262-264 (RLR) coordinates GTP. [4Fe-4S] cluster is bound at residue cysteine 274.

Belongs to the radical SAM superfamily. MoaA family. In terms of assembly, monomer and homodimer. [4Fe-4S] cluster serves as cofactor.

The catalysed reaction is GTP + AH2 + S-adenosyl-L-methionine = (8S)-3',8-cyclo-7,8-dihydroguanosine 5'-triphosphate + 5'-deoxyadenosine + L-methionine + A + H(+). Its pathway is cofactor biosynthesis; molybdopterin biosynthesis. Its function is as follows. Catalyzes the cyclization of GTP to (8S)-3',8-cyclo-7,8-dihydroguanosine 5'-triphosphate. The chain is GTP 3',8-cyclase from Edwardsiella ictaluri (strain 93-146).